The primary structure comprises 56 residues: Mitoregulin (56 aa).

Residues 2–9 are Mitochondrial matrix-facing; that stretch reads ADVSERTL. A helical transmembrane segment spans residues 10–27; it reads QLSVLVAFASGVLLGWQA. The Mitochondrial intermembrane segment spans residues 28-56; it reads NRLRRRYLDWRKRRLQDKLAATQKKLDLA.

As to quaternary structure, interacts with mitochondrial trifunctional enzyme, a heterotetrameric complex composed of 2 HADHA subunits and 2 HADHB subunits. Interacts with cytochrome b5 reductase CYB5R3; the interaction is required to maintain cellular lipid composition and leads to stimulation of mitochondrial respiratory complex I activity. Interacts with ATP synthase subunit ATP5F1B/ATP5B.

Its subcellular location is the mitochondrion inner membrane. Functionally, positively regulates mitochondrial complex assembly and/or stability. Increases mitochondrial membrane potential while decreasing mitochondrial reactive oxygen species. Increases mitochondrial respiration rate. Increased mitochondrial respiratory activity promotes myogenic differentiation which facilitates muscle growth and regeneration. Increases mitochondrial calcium retention capacity. Plays a role in maintenance of cellular lipid composition through its interaction with cytochrome b5 reductase CYB5R3 which is required for mitochondrial respiratory complex I activity. Interacts with the mitochondrial trifunctional enzyme complex (MTE) and enhances fatty acid beta-oxidation. Not required for MTE formation or stability. Modulates triglyceride clearance in adipocytes through its role in regulating fatty acid beta-oxidation and lipolysis. This Homo sapiens (Human) protein is Mitoregulin.